Here is a 231-residue protein sequence, read N- to C-terminus: NADH-ubiquinone oxidoreductase chain 4 (231 aa).

6 helical membrane-spanning segments follow: residues 1–21 (PIAG…YGII), 34–54 (MFLP…LTCL), 63–85 (IAYS…TPWG), 89–111 (AMAL…NTTY), 128–148 (ILPM…AIPP), and 169–189 (TIIL…HMLL).

This sequence belongs to the complex I subunit 4 family.

The protein localises to the mitochondrion membrane. It carries out the reaction a ubiquinone + NADH + 5 H(+)(in) = a ubiquinol + NAD(+) + 4 H(+)(out). Its function is as follows. Core subunit of the mitochondrial membrane respiratory chain NADH dehydrogenase (Complex I) that is believed to belong to the minimal assembly required for catalysis. Complex I functions in the transfer of electrons from NADH to the respiratory chain. The immediate electron acceptor for the enzyme is believed to be ubiquinone. This is NADH-ubiquinone oxidoreductase chain 4 (MT-ND4) from Bothrops bilineatus (Green jararaca).